Here is a 347-residue protein sequence, read N- to C-terminus: Isopentenyl-diphosphate delta-isomerase (347 aa).

9 to 10 (RK) lines the substrate pocket. FMN is bound by residues 65-67 (AMT), S95, and N124. Residue 95-97 (STH) coordinates substrate. Q154 contributes to the substrate binding site. E155 is a Mg(2+) binding site. FMN contacts are provided by residues K186, S211, T216, 262-264 (GVR), and 283-284 (SR).

It belongs to the IPP isomerase type 2 family. As to quaternary structure, homooctamer. Dimer of tetramers. It depends on FMN as a cofactor. NADPH serves as cofactor. Requires Mg(2+) as cofactor.

The protein localises to the cytoplasm. The enzyme catalyses isopentenyl diphosphate = dimethylallyl diphosphate. Its function is as follows. Involved in the biosynthesis of isoprenoids. Catalyzes the 1,3-allylic rearrangement of the homoallylic substrate isopentenyl (IPP) to its allylic isomer, dimethylallyl diphosphate (DMAPP). This Staphylococcus saprophyticus subsp. saprophyticus (strain ATCC 15305 / DSM 20229 / NCIMB 8711 / NCTC 7292 / S-41) protein is Isopentenyl-diphosphate delta-isomerase.